Reading from the N-terminus, the 352-residue chain is Alanine racemase (352 aa).

Lysine 33 acts as the Proton acceptor; specific for D-alanine in catalysis. The residue at position 33 (lysine 33) is an N6-(pyridoxal phosphate)lysine. Arginine 129 provides a ligand contact to substrate. The Proton acceptor; specific for L-alanine role is filled by tyrosine 250. Methionine 298 contributes to the substrate binding site.

It belongs to the alanine racemase family. It depends on pyridoxal 5'-phosphate as a cofactor.

The enzyme catalyses L-alanine = D-alanine. It functions in the pathway amino-acid biosynthesis; D-alanine biosynthesis; D-alanine from L-alanine: step 1/1. Catalyzes the interconversion of L-alanine and D-alanine. May also act on other amino acids. The protein is Alanine racemase (alr) of Neisseria gonorrhoeae (strain ATCC 700825 / FA 1090).